A 1091-amino-acid polypeptide reads, in one-letter code: Voltage-dependent calcium channel subunit alpha-2/delta-3 (1091 aa).

Residues 1–28 (MAGPGSPRRASRGASALLAAALLYAALG) form the signal peptide. Residues 29-1068 (DVVRSEQQIP…HPEENARECG (1040 aa)) lie on the Extracellular side of the membrane. An N-linked (GlcNAc...) asparagine glycan is attached at N166. The VWFA domain occupies 256-438 (DVVILVDVSG…ENVMEYLHVL (183 aa)). The a divalent metal cation site is built by D262, S264, and S266. The short motif at 262-266 (DVSGS) is the MIDAS-like motif element. The N-linked (GlcNAc...) asparagine glycan is linked to N309. C412 and C1055 are oxidised to a cystine. Residues 452–549 (WTEAYIDSTL…RLLYEEGKKR (98 aa)) form the Cache domain. 3 N-linked (GlcNAc...) asparagine glycosylation sites follow: N553, N632, and N793. The residue at position 924 (Y924) is a Phosphotyrosine. Residues 1069-1089 (GAPSLQAQTVLLLLPLLLMLF) traverse the membrane as a helical segment. The Cytoplasmic portion of the chain corresponds to 1090 to 1091 (SR).

The protein belongs to the calcium channel subunit alpha-2/delta family. Dimer formed of alpha-2-2 and delta-2 chains; disulfide-linked. Voltage-dependent calcium channels are multisubunit complexes, consisting of alpha-1 (CACNA1), alpha-2 (CACNA2D), beta (CACNB) and delta (CACNA2D) subunits in a 1:1:1:1 ratio. N-glycosylated. Post-translationally, may be proteolytically processed into subunits alpha-2-3 and delta-3 that are disulfide-linked. It is however unclear whether such cleavage really takes place in vivo and has a functional role. Only detected in brain. Not present in lung, testis, aorta, spleen, jejunum, ventricular muscle and kidney (at protein level). According to PubMed:11687876, it is brain-specific, while according to PubMed:11245980, it is widely expressed.

The protein localises to the membrane. Its function is as follows. The alpha-2/delta subunit of voltage-dependent calcium channels regulates calcium current density and activation/inactivation kinetics of the calcium channel. Acts as a regulatory subunit for P/Q-type calcium channel (CACNA1A), N-type (CACNA1B), L-type (CACNA1C OR CACNA1D) but not T-type (CACNA1G). The protein is Voltage-dependent calcium channel subunit alpha-2/delta-3 (CACNA2D3) of Homo sapiens (Human).